A 253-amino-acid polypeptide reads, in one-letter code: Proproteinase E (253 aa).

Residues 1–11 constitute a propeptide, activation peptide; it reads FSQPFSRPSSR. The Peptidase S1 domain maps to 12–251; it reads VVNGEDAVPY…FIDWIDETIA (240 aa). Disulfide bonds link cysteine 41–cysteine 57, cysteine 100–cysteine 103, cysteine 140–cysteine 206, cysteine 171–cysteine 187, and cysteine 196–cysteine 227.

This sequence belongs to the peptidase S1 family. In terms of assembly, monomer. The zymogen is secreted as a ternary complex composed of procarboxypeptidase A, chymotrypsinogen C and proproteinase E. Pancreas.

It localises to the secreted. The protein resides in the extracellular space. Its function is as follows. May protect procarboxypeptidase A against denaturation in the acidic environment of the ruminant duodenum. The protein is Proproteinase E of Bos taurus (Bovine).